Reading from the N-terminus, the 320-residue chain is Polyprenal reductase 1 (320 aa).

The next 6 helical transmembrane spans lie at 5-25 (IVWL…LPLV), 64-84 (FFGH…AATW), 143-163 (MHIL…LSLC), 200-220 (PLMK…WGWI), 243-263 (IIPY…AEIV), and 266-286 (LGLL…FGFV).

Belongs to the steroid 5-alpha reductase family. Polyprenal reductase subfamily. In terms of tissue distribution, expressed in roots and flowers.

The protein localises to the cell membrane. It catalyses the reaction a di-trans,poly-cis-dolichal + NADP(+) = a di-trans,poly-cis-polyprenal + NADPH + H(+). The protein operates within protein modification; protein glycosylation. Functionally, plays a key role in early steps of protein N-linked glycosylation by being involved in the conversion of polyprenol into dolichol. Acts as a polyprenal reductase that mediates the reduction of polyprenal into dolichal in a NADP-dependent mechanism. Dolichols are required for the synthesis of dolichol-linked monosaccharides and the oligosaccharide precursor used for N-glycosylation. Involved in the regulation of plant growth and reproductive processes. This chain is Polyprenal reductase 1, found in Arabidopsis thaliana (Mouse-ear cress).